The following is a 190-amino-acid chain: Cytoglobin (190 aa).

Residues methionine 1 to glutamate 21 form a disordered region. The 150-residue stretch at glutamate 18–lysine 167 folds into the Globin domain. Cysteine 38 and cysteine 83 are oxidised to a cystine. Histidine 81 and histidine 113 together coordinate heme b.

It belongs to the globin family. Monomeric. Homodimer; disulfide-linked in vitro. Also homooligomeric in vitro. The formation of an intramolecular disulfide bond between cysteines Cys-38 and Cys-83 specifically enhances the nitrite reductase activity. Widely expressed (at protein level).

It localises to the cytoplasm. The protein localises to the nucleus. It carries out the reaction Fe(II)-heme b-[protein] + nitric oxide + O2 = Fe(III)-heme b-[protein] + nitrate. The enzyme catalyses Fe(III)-heme b-[protein] + nitric oxide + H2O = Fe(II)-heme b-[protein] + nitrite + 2 H(+). The catalysed reaction is 2 superoxide + 2 H(+) = H2O2 + O2. It catalyses the reaction H2O2 + AH2 = A + 2 H2O. The nitric oxide dioxygenase activity is activated by a reducing system composed of cytochrome b5, its upstream reductase CYB5R3 and NADH. Probable multifunctional globin with a hexacoordinated heme iron required for the catalysis of various reactions depending on redox condition of the cell as well as oxygen availability. Has a nitric oxide dioxygenase (NOD) activity and is most probably involved in cell-mediated and oxygen-dependent nitric oxide consumption. By scavenging this second messenger may regulate several biological processes including endothelium-mediated vasodilation and vascular tone. Under normoxic conditions functions as a nitric oxide dioxygenase (NOD) but under hypoxic conditions the globin may switch its function to that of a nitrite (NO2) reductase (NiR), generating nitric oxide. Could also have peroxidase and superoxide dismutase activities, detoxifying reactive oxygen species and protecting cells against oxidative stress. Also binds dioxygen with low affinity and could function as an oxygen sensor but has probably no function as a respiratory oxygen carrier. This Rattus norvegicus (Rat) protein is Cytoglobin.